Here is a 66-residue protein sequence, read N- to C-terminus: Large ribosomal subunit protein bL35 (66 aa).

The span at 1–44 (MPKLKSHRGAAKRFRKTASGAIKRRGAYRNHILTKKSTKQKRHL) shows a compositional bias: basic residues. Residues 1-48 (MPKLKSHRGAAKRFRKTASGAIKRRGAYRNHILTKKSTKQKRHLRVEA) form a disordered region.

Belongs to the bacterial ribosomal protein bL35 family.

This chain is Large ribosomal subunit protein bL35, found in Legionella pneumophila (strain Corby).